Here is a 207-residue protein sequence, read N- to C-terminus: Holliday junction branch migration complex subunit RuvA (207 aa).

The domain I stretch occupies residues 1–71; it reads MIVSIAGKLV…RLTPRLIGFS (71 aa). The tract at residues 72–149 is domain II; that stretch reads TLPERQFFDL…RFALMVAGGE (78 aa). The flexible linker stretch occupies residues 150-155; it reads VADAME. The segment at 156-207 is domain III; sequence VESPIVSDTYDALVTLGHSESDARKLIDETLATGKKFKDTESLLTAIYQRSK.

Belongs to the RuvA family. In terms of assembly, homotetramer. Forms an RuvA(8)-RuvB(12)-Holliday junction (HJ) complex. HJ DNA is sandwiched between 2 RuvA tetramers; dsDNA enters through RuvA and exits via RuvB. An RuvB hexamer assembles on each DNA strand where it exits the tetramer. Each RuvB hexamer is contacted by two RuvA subunits (via domain III) on 2 adjacent RuvB subunits; this complex drives branch migration. In the full resolvosome a probable DNA-RuvA(4)-RuvB(12)-RuvC(2) complex forms which resolves the HJ.

Its subcellular location is the cytoplasm. Its function is as follows. The RuvA-RuvB-RuvC complex processes Holliday junction (HJ) DNA during genetic recombination and DNA repair, while the RuvA-RuvB complex plays an important role in the rescue of blocked DNA replication forks via replication fork reversal (RFR). RuvA specifically binds to HJ cruciform DNA, conferring on it an open structure. The RuvB hexamer acts as an ATP-dependent pump, pulling dsDNA into and through the RuvAB complex. HJ branch migration allows RuvC to scan DNA until it finds its consensus sequence, where it cleaves and resolves the cruciform DNA. The chain is Holliday junction branch migration complex subunit RuvA from Rhodopirellula baltica (strain DSM 10527 / NCIMB 13988 / SH1).